Consider the following 353-residue polypeptide: Photosystem II D2 protein (353 aa).

At Thr-2 the chain carries N-acetylthreonine. Residue Thr-2 is modified to Phosphothreonine. The chain crosses the membrane as a helical span at residues 41 to 61; that stretch reads CAYFALGGWFTGTTFVTSWYT. His-118 provides a ligand contact to chlorophyll a. A helical membrane pass occupies residues 125-141; that stretch reads GFMLRQFEIARSVNLRP. Pheophytin a is bound by residues Gln-130 and Asn-143. The helical transmembrane segment at 153–166 threads the bilayer; sequence VFVSVFLIYPLGQS. His-198 is a binding site for chlorophyll a. A helical transmembrane segment spans residues 208 to 228; it reads AALLCAIHGATVENTLFEDGD. 2 residues coordinate a plastoquinone: His-215 and Phe-262. His-215 is a binding site for Fe cation. Fe cation is bound at residue His-269. Residues 279–295 traverse the membrane as a helical segment; it reads GLWMSAIGVVGLALNLR.

The protein belongs to the reaction center PufL/M/PsbA/D family. PSII is composed of 1 copy each of membrane proteins PsbA, PsbB, PsbC, PsbD, PsbE, PsbF, PsbH, PsbI, PsbJ, PsbK, PsbL, PsbM, PsbT, PsbX, PsbY, PsbZ, Psb30/Ycf12, at least 3 peripheral proteins of the oxygen-evolving complex and a large number of cofactors. It forms dimeric complexes. The cofactor is The D1/D2 heterodimer binds P680, chlorophylls that are the primary electron donor of PSII, and subsequent electron acceptors. It shares a non-heme iron and each subunit binds pheophytin, quinone, additional chlorophylls, carotenoids and lipids. There is also a Cl(-1) ion associated with D1 and D2, which is required for oxygen evolution. The PSII complex binds additional chlorophylls, carotenoids and specific lipids..

Its subcellular location is the plastid. It localises to the chloroplast thylakoid membrane. It catalyses the reaction 2 a plastoquinone + 4 hnu + 2 H2O = 2 a plastoquinol + O2. Functionally, photosystem II (PSII) is a light-driven water:plastoquinone oxidoreductase that uses light energy to abstract electrons from H(2)O, generating O(2) and a proton gradient subsequently used for ATP formation. It consists of a core antenna complex that captures photons, and an electron transfer chain that converts photonic excitation into a charge separation. The D1/D2 (PsbA/PsbD) reaction center heterodimer binds P680, the primary electron donor of PSII as well as several subsequent electron acceptors. D2 is needed for assembly of a stable PSII complex. The protein is Photosystem II D2 protein of Tetradesmus obliquus (Green alga).